Consider the following 746-residue polypeptide: tRNA (cytosine(34)-C(5))-methyltransferase (746 aa).

The tract at residues Met1–Gln30 is disordered. Residues Arg18–Gln30 are compositionally biased toward basic and acidic residues. S-adenosyl-L-methionine contacts are provided by residues Cys184–Lys190, Asp216, Asp243, and Asp270. Cys323 (nucleophile) is an active-site residue. Disordered stretches follow at residues Gln454–Trp475 and Ser701–Ser746. Positions Ala463 to Ser472 are enriched in basic and acidic residues. Acidic residues predominate over residues Ala704–Ala714. A compositionally biased stretch (polar residues) spans Ala731–Ser746.

Belongs to the class I-like SAM-binding methyltransferase superfamily. RsmB/NOP family. TRM4 subfamily. As to expression, ubiquitously expressed during embryonic development. Some enrichment is observed in the proventriculus area of the foregut and in the hindgut.

Its subcellular location is the nucleus. It localises to the nucleolus. It carries out the reaction cytidine(34) in tRNA precursor + S-adenosyl-L-methionine = 5-methylcytidine(34) in tRNA precursor + S-adenosyl-L-homocysteine + H(+). Functionally, RNA methyltransferase that methylates tRNAs. Methylates cytosine to 5-methylcytosine (m5C) at position 34 of intron-containing tRNA(Leu)(CAA) precursors. Required for short-term memory. In Drosophila melanogaster (Fruit fly), this protein is tRNA (cytosine(34)-C(5))-methyltransferase.